We begin with the raw amino-acid sequence, 89 residues long: Large ribosomal subunit protein eL34 (89 aa).

It belongs to the eukaryotic ribosomal protein eL34 family.

The chain is Large ribosomal subunit protein eL34 from Methanococcus vannielii (strain ATCC 35089 / DSM 1224 / JCM 13029 / OCM 148 / SB).